The sequence spans 311 residues: Porphobilinogen deaminase (311 aa).

Residue Cys-241 is modified to S-(dipyrrolylmethanemethyl)cysteine.

Belongs to the HMBS family. As to quaternary structure, monomer. Requires dipyrromethane as cofactor.

The enzyme catalyses 4 porphobilinogen + H2O = hydroxymethylbilane + 4 NH4(+). It functions in the pathway porphyrin-containing compound metabolism; protoporphyrin-IX biosynthesis; coproporphyrinogen-III from 5-aminolevulinate: step 2/4. In terms of biological role, tetrapolymerization of the monopyrrole PBG into the hydroxymethylbilane pre-uroporphyrinogen in several discrete steps. The polypeptide is Porphobilinogen deaminase (hemC) (Halalkalibacterium halodurans (strain ATCC BAA-125 / DSM 18197 / FERM 7344 / JCM 9153 / C-125) (Bacillus halodurans)).